The primary structure comprises 371 residues: Aminomethyltransferase (371 aa).

The protein belongs to the GcvT family. As to quaternary structure, the glycine cleavage system is composed of four proteins: P, T, L and H.

It carries out the reaction N(6)-[(R)-S(8)-aminomethyldihydrolipoyl]-L-lysyl-[protein] + (6S)-5,6,7,8-tetrahydrofolate = N(6)-[(R)-dihydrolipoyl]-L-lysyl-[protein] + (6R)-5,10-methylene-5,6,7,8-tetrahydrofolate + NH4(+). In terms of biological role, the glycine cleavage system catalyzes the degradation of glycine. This is Aminomethyltransferase from Leptospira interrogans serogroup Icterohaemorrhagiae serovar Lai (strain 56601).